We begin with the raw amino-acid sequence, 591 residues long: ESX-1 secretion system protein EccCb1 (591 aa).

FtsK domains follow at residues 65-259 (LQDV…NETQ) and 359-545 (LTPA…EKQE). ATP contacts are provided by residues 84–91 (GAPQTGKS) and 376–383 (GAAKSGKT).

Part of the ESX-1 / type VII secretion system (T7SS), which is composed of cytosolic and membrane components. The ESX-1 membrane complex is composed of EccB1, EccCa1, EccCb1, EccD1 and EccE1. Interacts with EccCa1, EspK and the C-terminus of EsxB. Residues 1-261 interact with EsxB and an artificial EsxB-EsxA heterodimer.

The protein resides in the cytoplasm. EsxB binding to the second FtsK domain of EccCb1 causes multimerization; a subsequent unknown step relieves the allosteric inhibition of linker 2 on FtsK domain 1 (in EccCa1 subunit), activating the ATPase activity. In terms of biological role, part of the ESX-1 specialized secretion system, which delivers several virulence factors to host cells during infection, including the key virulence factors EsxA (ESAT-6) and EsxB (CFP-10). EccCb1 may link the cytosolic components of the system with the membrane components. The protein is ESX-1 secretion system protein EccCb1 of Mycobacterium tuberculosis (strain ATCC 25618 / H37Rv).